The primary structure comprises 361 residues: Phosphoserine aminotransferase (361 aa).

R43 serves as a coordination point for L-glutamate. Residues 77-78 (AS), W103, T153, D173, and Q196 contribute to the pyridoxal 5'-phosphate site. K197 is modified (N6-(pyridoxal phosphate)lysine). Residue 238-239 (NT) coordinates pyridoxal 5'-phosphate.

It belongs to the class-V pyridoxal-phosphate-dependent aminotransferase family. SerC subfamily. Homodimer. The cofactor is pyridoxal 5'-phosphate.

It localises to the cytoplasm. The catalysed reaction is O-phospho-L-serine + 2-oxoglutarate = 3-phosphooxypyruvate + L-glutamate. It catalyses the reaction 4-(phosphooxy)-L-threonine + 2-oxoglutarate = (R)-3-hydroxy-2-oxo-4-phosphooxybutanoate + L-glutamate. It functions in the pathway amino-acid biosynthesis; L-serine biosynthesis; L-serine from 3-phospho-D-glycerate: step 2/3. In terms of biological role, catalyzes the reversible conversion of 3-phosphohydroxypyruvate to phosphoserine and of 3-hydroxy-2-oxo-4-phosphonooxybutanoate to phosphohydroxythreonine. The sequence is that of Phosphoserine aminotransferase from Bacillus anthracis (strain A0248).